We begin with the raw amino-acid sequence, 69 residues long: Large ribosomal subunit protein bL32c (69 aa).

It belongs to the bacterial ribosomal protein bL32 family.

It is found in the plastid. It localises to the chloroplast. This chain is Large ribosomal subunit protein bL32c (rpl32), found in Marchantia polymorpha (Common liverwort).